The following is a 69-amino-acid chain: Arabinogalactan protein 24 (69 aa).

The N-terminal stretch at 1–25 (MMMMTKMFVQIAVVCLLATMAVVSA) is a signal peptide. 4 positions are modified to 4-hydroxyproline: proline 34, proline 36, proline 38, and proline 40. Proline 34, proline 36, proline 38, and proline 40 each carry an O-linked (Ara...) hydroxyproline glycan. Residue serine 42 is the site of GPI-anchor amidated serine attachment. Positions 43–69 (SSTVVSATNMFTVLAIAAVALVVGSNH) are cleaved as a propeptide — removed in mature form.

The protein belongs to the AG-peptide AGP family. Contains 4-hydroxyproline; hydroxylated on Pro-34, Pro-36, Pro-38 and Pro-40. Post-translationally, O-glycosylated on hydroxyprolines; noncontiguous hydroxylproline residues are glycosylated with arabinogalactan.

The protein localises to the cell membrane. Functionally, proteoglycan that seems to be implicated in diverse developmental roles such as differentiation, cell-cell recognition, embryogenesis and programmed cell death. The protein is Arabinogalactan protein 24 of Arabidopsis thaliana (Mouse-ear cress).